We begin with the raw amino-acid sequence, 480 residues long: Pyruvate kinase II (480 aa).

Position 36 (R36) interacts with substrate. K(+) is bound by residues N38, S40, and D70. N38–H41 lines the ATP pocket. ATP contacts are provided by R77 and K160. K223 is a substrate binding site. Position 225 (E225) interacts with Mg(2+). G251, D252, and T284 together coordinate substrate. D252 is a binding site for Mg(2+).

It belongs to the pyruvate kinase family. As to quaternary structure, homotetramer. Requires Mg(2+) as cofactor. K(+) is required as a cofactor.

It carries out the reaction pyruvate + ATP = phosphoenolpyruvate + ADP + H(+). Its pathway is carbohydrate degradation; glycolysis; pyruvate from D-glyceraldehyde 3-phosphate: step 5/5. Its activity is regulated as follows. Allosterically activated by AMP and by several sugar phosphates. Belongs to type II PK. Catalyzes the formation of pyruvate in the last step of glycolysis, it is irreversible under physiological conditions. The reaction is critical for the control of metabolic flux in the second part of glycolysis. This Salmonella typhimurium (strain LT2 / SGSC1412 / ATCC 700720) protein is Pyruvate kinase II (pykA).